An 820-amino-acid polypeptide reads, in one-letter code: Scavenger receptor class F member 1 (820 aa).

Residues 1–23 (MLAAMGLELVFSLLLLWTQGTQG) form the signal peptide. The Extracellular portion of the chain corresponds to 24–422 (STLDPAGQHV…TCQLGRHGKN (399 aa)). 4 consecutive EGF-like domains span residues 56–90 (TIPI…AQCS), 98–133 (WGHD…RLCE), 163–193 (RRPC…RRCS), and 217–251 (WGPE…IRCE). Disulfide bonds link cysteine 60/cysteine 72, cysteine 66/cysteine 78, cysteine 80/cysteine 89, cysteine 102/cysteine 114, cysteine 108/cysteine 121, cysteine 123/cysteine 132, cysteine 166/cysteine 174, cysteine 168/cysteine 181, cysteine 183/cysteine 192, cysteine 221/cysteine 232, cysteine 225/cysteine 239, and cysteine 241/cysteine 250. The N-linked (GlcNAc...) asparagine glycan is linked to asparagine 291. EGF-like domains follow at residues 304 to 341 (FGER…HRCE) and 353 to 384 (CSST…TSCN). Residues 423–443 (ALIVGILVPLLLLLMGIVCCA) traverse the membrane as a helical segment. Residues 444 to 820 (YCCSGTRLDP…VVPMSVPPQH (377 aa)) are Cytoplasmic-facing. Disordered regions lie at residues 549-685 (PMAQ…IQES) and 715-820 (NYQK…PPQH). 2 positions are modified to phosphoserine: serine 590 and serine 607. Positions 631–648 (QEAEESTGPEQVNTEEDA) are enriched in acidic residues. Residues 650–662 (TATSSGDPATSHG) show a composition bias toward polar residues.

As to quaternary structure, heterophilic interaction with SREC2 via its extracellular domain. The heterophilic interaction is suppressed by the presence of ligand such as Ac-LDL. Interacts with AVIL; the interaction occurs in embryonic dorsal root ganglions at 18 dpc and induces neurite-like outgrowth. In terms of tissue distribution, expressed weakly in brain, spinal cord and dorsal root ganglions.

The protein resides in the membrane. Functionally, mediates the binding and degradation of acetylated low density lipoprotein (Ac-LDL). Mediates heterophilic interactions, suggesting a function as adhesion protein. Plays a role in the regulation of neurite-like outgrowth. This Mus musculus (Mouse) protein is Scavenger receptor class F member 1 (Scarf1).